The primary structure comprises 260 residues: 1-(5-phosphoribosyl)-5-[(5-phosphoribosylamino)methylideneamino] imidazole-4-carboxamide isomerase (260 aa).

Catalysis depends on Asp-8, which acts as the Proton acceptor. Residue Asp-130 is the Proton donor of the active site.

Belongs to the HisA/HisF family.

The protein localises to the cytoplasm. It catalyses the reaction 1-(5-phospho-beta-D-ribosyl)-5-[(5-phospho-beta-D-ribosylamino)methylideneamino]imidazole-4-carboxamide = 5-[(5-phospho-1-deoxy-D-ribulos-1-ylimino)methylamino]-1-(5-phospho-beta-D-ribosyl)imidazole-4-carboxamide. The protein operates within amino-acid biosynthesis; L-histidine biosynthesis; L-histidine from 5-phospho-alpha-D-ribose 1-diphosphate: step 4/9. The protein is 1-(5-phosphoribosyl)-5-[(5-phosphoribosylamino)methylideneamino] imidazole-4-carboxamide isomerase of Chlorobium phaeobacteroides (strain BS1).